Reading from the N-terminus, the 204-residue chain is Phosphoribosyl-dephospho-CoA transferase (204 aa).

Catalysis depends on residues Asp129 and Asp131.

This sequence belongs to the MdcG family.

The enzyme catalyses apo-[malonate decarboxylase ACP] + 2'-(5''-triphospho-alpha-D-ribosyl)-3'-dephospho-CoA = holo-[malonate decarboxylase ACP] + diphosphate. In terms of biological role, transfers 2'-(5-triphosphoribosyl)-3'-dephosphocoenzyme-A to the apo-[acyl-carrier-protein] of the malonate decarboxylase to yield holo-[acyl-carrier-protein]. The polypeptide is Phosphoribosyl-dephospho-CoA transferase (Pseudomonas putida (strain GB-1)).